Reading from the N-terminus, the 403-residue chain is Serine/threonine transporter SstT (403 aa).

The next 9 helical transmembrane spans lie at 14 to 34 (VTQI…APAI), 44 to 64 (VFVS…VMAS), 79 to 99 (ILWL…FASM), 138 to 158 (ALLN…GVAL), 175 to 195 (GVTL…FGLV), 214 to 234 (LAVL…LIVF), 295 to 315 (MAGA…TLGI), 327 to 347 (VVAA…LLLI), and 353 to 373 (LFGI…IIGV).

It belongs to the dicarboxylate/amino acid:cation symporter (DAACS) (TC 2.A.23) family.

It is found in the cell inner membrane. The catalysed reaction is L-serine(in) + Na(+)(in) = L-serine(out) + Na(+)(out). The enzyme catalyses L-threonine(in) + Na(+)(in) = L-threonine(out) + Na(+)(out). In terms of biological role, involved in the import of serine and threonine into the cell, with the concomitant import of sodium (symport system). This chain is Serine/threonine transporter SstT, found in Pseudomonas putida (strain ATCC 47054 / DSM 6125 / CFBP 8728 / NCIMB 11950 / KT2440).